Here is an 858-residue protein sequence, read N- to C-terminus: Elongation factor 2 (858 aa).

Residues 17–362 (ANIRNMSVIA…MITIHLPSPV (346 aa)) enclose the tr-type G domain. 26 to 33 (AHVDHGKS) contacts GTP. Thr-54 carries the phosphothreonine modification. Thr-57 bears the Phosphothreonine; by EEF2K mark. Phosphothreonine is present on Thr-59. An N6-succinyllysine modification is found at Lys-152. GTP contacts are provided by residues 158 to 161 (NKMD) and 216 to 218 (SGL). At Lys-235 the chain carries N6-acetyllysine. Lys-239 is modified (N6-acetyllysine; alternate). Lys-239 participates in a covalent cross-link: Glycyl lysine isopeptide (Lys-Gly) (interchain with G-Cter in SUMO1); alternate. Tyr-265 carries the phosphotyrosine; by CSK modification. Position 272 is an N6-acetyllysine; alternate (Lys-272). Position 272 is an N6-succinyllysine; alternate (Lys-272). Lys-275 is subject to N6-acetyllysine. A Glycyl lysine isopeptide (Lys-Gly) (interchain with G-Cter in SUMO) cross-link involves residue Lys-322. A Phosphoserine modification is found at Ser-325. Position 373 is a phosphotyrosine; by CSK (Tyr-373). Thr-435 bears the Phosphothreonine mark. An N6-acetyllysine mark is found at Lys-439 and Lys-445. A Phosphoserine modification is found at Ser-502. Residue Lys-525 is modified to N6,N6,N6-trimethyllysine; by EEF2KMT. Residue Lys-529 forms a Glycyl lysine isopeptide (Lys-Gly) (interchain with G-Cter in SUMO) linkage. Residue Lys-572 is modified to N6-succinyllysine. At Ser-595 the chain carries Phosphoserine; by CDK2. Lys-619 bears the N6-acetyllysine mark. His-715 carries the post-translational modification Diphthamide.

Belongs to the TRAFAC class translation factor GTPase superfamily. Classic translation factor GTPase family. EF-G/EF-2 subfamily. Binds to 80S ribosomes. Actively translating ribosomes show mutually exclusive binding of eIF5a (EIF5A or EIF5A2) and EEF2/eEF2. Interacts with SERBP1; interaction sequesters EEF2/eEF2 at the A-site of the ribosome, thereby blocking the interaction sites of the mRNA-tRNA complex, promoting ribosome stabilization and hibernation. Interacts with HABP4; interaction takes place at the A-site of hibernating ribosomes and promotes ribosome stabilization. Component of the mRNA surveillance SURF complex, at least composed of ERF1, ERF3 (ERF3A or ERF3B), EEF2, UPF1/RENT1, SMG1, SMG8 and SMG9. Interacts with RBPMS2. In terms of processing, phosphorylation by EF-2 kinase completely inactivates EF-2; it requires prior phosphorylation by CDK2 at Ser-595 during mitotic prometaphase. Phosphorylation by CSK promotes SUMOylation, proteolytic cleavage, and nuclear translocation if the C-terminal fragment. Diphthamide is 2-[3-carboxyamido-3-(trimethyl-ammonio)propyl]histidine. Post-translationally, ISGylated. In terms of processing, proteolytically processed at two sites following phosphorylation by CSK. SUMOylated following phosphorylation by CSK, promotes proteolytic cleavage.

The protein resides in the cytoplasm. It localises to the nucleus. The enzyme catalyses GTP + H2O = GDP + phosphate + H(+). In terms of biological role, catalyzes the GTP-dependent ribosomal translocation step during translation elongation. During this step, the ribosome changes from the pre-translocational (PRE) to the post-translocational (POST) state as the newly formed A-site-bound peptidyl-tRNA and P-site-bound deacylated tRNA move to the P and E sites, respectively. Catalyzes the coordinated movement of the two tRNA molecules, the mRNA and conformational changes in the ribosome. The polypeptide is Elongation factor 2 (EEF2) (Pongo abelii (Sumatran orangutan)).